The following is an 87-amino-acid chain: uncharacterized protein (87 aa).

Positions 67-87 are disordered; the sequence is TGGDPREAVVRPADQVEGYTG.

This is an uncharacterized protein from Mycobacterium bovis (strain ATCC BAA-935 / AF2122/97).